The following is a 178-amino-acid chain: uncharacterized protein (178 aa).

An N-terminal signal peptide occupies residues 1–19; that stretch reads MKKNIHILGASGVGTSTLG.

This is an uncharacterized protein from Bacillus subtilis (strain 168).